The primary structure comprises 449 residues: ATP-dependent protease ATPase subunit HslU (449 aa).

ATP-binding positions include I18, 60-65 (GVGKTE), D261, E327, and R399.

It belongs to the ClpX chaperone family. HslU subfamily. A double ring-shaped homohexamer of HslV is capped on each side by a ring-shaped HslU homohexamer. The assembly of the HslU/HslV complex is dependent on binding of ATP.

The protein localises to the cytoplasm. In terms of biological role, ATPase subunit of a proteasome-like degradation complex; this subunit has chaperone activity. The binding of ATP and its subsequent hydrolysis by HslU are essential for unfolding of protein substrates subsequently hydrolyzed by HslV. HslU recognizes the N-terminal part of its protein substrates and unfolds these before they are guided to HslV for hydrolysis. In Oleidesulfovibrio alaskensis (strain ATCC BAA-1058 / DSM 17464 / G20) (Desulfovibrio alaskensis), this protein is ATP-dependent protease ATPase subunit HslU.